A 375-amino-acid polypeptide reads, in one-letter code: Chaperone protein DnaJ (375 aa).

Residues 5-70 (DYYELLGISR…EKRAAYDQYG (66 aa)) enclose the J domain. The segment at 132 to 210 (GTTKDIKIHT…CHGDGRVNKA (79 aa)) adopts a CR-type zinc-finger fold. Cysteine 145, cysteine 148, cysteine 162, cysteine 165, cysteine 184, cysteine 187, cysteine 198, and cysteine 201 together coordinate Zn(2+). CXXCXGXG motif repeat units lie at residues 145–152 (CDTCHGTG), 162–169 (CPHCHGAG), 184–191 (CHFCHGTG), and 198–205 (CKTCHGDG).

The protein belongs to the DnaJ family. In terms of assembly, homodimer. The cofactor is Zn(2+).

It localises to the cytoplasm. Its function is as follows. Participates actively in the response to hyperosmotic and heat shock by preventing the aggregation of stress-denatured proteins and by disaggregating proteins, also in an autonomous, DnaK-independent fashion. Unfolded proteins bind initially to DnaJ; upon interaction with the DnaJ-bound protein, DnaK hydrolyzes its bound ATP, resulting in the formation of a stable complex. GrpE releases ADP from DnaK; ATP binding to DnaK triggers the release of the substrate protein, thus completing the reaction cycle. Several rounds of ATP-dependent interactions between DnaJ, DnaK and GrpE are required for fully efficient folding. Also involved, together with DnaK and GrpE, in the DNA replication of plasmids through activation of initiation proteins. The polypeptide is Chaperone protein DnaJ (Aggregatibacter actinomycetemcomitans (Actinobacillus actinomycetemcomitans)).